A 385-amino-acid chain; its full sequence is Polyketide synthase 2 (385 aa).

Cysteine 157 is an active-site residue.

Belongs to the thiolase-like superfamily. Chalcone/stilbene synthases family. In terms of tissue distribution, expressed in leaves and glandular trichomes.

The protein resides in the cytoplasm. Functionally, polyketide synthase responsible for the biosynthesis of secondary metabolites. The polypeptide is Polyketide synthase 2 (PKSG2) (Cannabis sativa (Hemp)).